The following is a 77-amino-acid chain: Large ribosomal subunit protein uL29 (77 aa).

Belongs to the universal ribosomal protein uL29 family.

This Corynebacterium urealyticum (strain ATCC 43042 / DSM 7109) protein is Large ribosomal subunit protein uL29.